Reading from the N-terminus, the 253-residue chain is 5'-nucleotidase SurE (253 aa).

The a divalent metal cation site is built by aspartate 8, aspartate 9, serine 39, and asparagine 97.

This sequence belongs to the SurE nucleotidase family. The cofactor is a divalent metal cation.

The protein localises to the cytoplasm. The enzyme catalyses a ribonucleoside 5'-phosphate + H2O = a ribonucleoside + phosphate. In terms of biological role, nucleotidase that shows phosphatase activity on nucleoside 5'-monophosphates. This Aeromonas hydrophila subsp. hydrophila (strain ATCC 7966 / DSM 30187 / BCRC 13018 / CCUG 14551 / JCM 1027 / KCTC 2358 / NCIMB 9240 / NCTC 8049) protein is 5'-nucleotidase SurE.